The following is a 727-amino-acid chain: Sodium-dependent neutral amino acid transporter SLC6A17 (727 aa).

Residues 1–69 (MPKNSKVTQR…RPAWNSKLQY (69 aa)) lie on the Cytoplasmic side of the membrane. 2 positions are modified to phosphoserine: Ser13 and Ser20. The chain crosses the membrane as a helical span at residues 70–90 (ILAQIGFSVGLGNIWRFPYLC). The Extracellular portion of the chain corresponds to 91–95 (QKNGG). Residues 96 to 116 (GAYLVPYLVLLIIIGIPLFFL) form a helical membrane-spanning segment. The Cytoplasmic segment spans residues 117–147 (ELAVGQRIRRGSIGVWHYICPRLGGIGFSSC). Residues 148–168 (IVCLFVGLYYNVIIGWSIFYF) traverse the membrane as a helical segment. Residues 169–222 (FKSFQYPLPWSECPVVRNGSVAVVEAECEKSSATTYFWYREALDISDSISESGG) are Extracellular-facing. Asn186 carries N-linked (GlcNAc...) asparagine glycosylation. The helical transmembrane segment at 223–243 (LNWKMTLCLLVAWSIVGMAVV) threads the bilayer. Over 244 to 253 (KGIQSSGKVM) the chain is Cytoplasmic. Residues 254-274 (YFSSLFPYVVLACFLVRGLLL) form a helical membrane-spanning segment. The Extracellular portion of the chain corresponds to 275 to 300 (RGAVDGILHMFTPKLDKMLDPQVWRE). A helical membrane pass occupies residues 301-321 (AATQVFFALGLGFGGVIAFSS). Residues 322 to 334 (YNKQDNNCHFDAA) are Cytoplasmic-facing. The chain crosses the membrane as a helical span at residues 335-355 (LVSFINFFTSVLATLVVFAVL). At 356-460 (GFKANIMNEK…HFPASPFWSV (105 aa)) the chain is on the extracellular side. The residue at position 377 (Tyr377) is a Phosphotyrosine. Asn393 carries N-linked (GlcNAc...) asparagine glycosylation. Residues 461–481 (MFFLMLINLGLGSMIGTMAGI) form a helical membrane-spanning segment. Topologically, residues 482-490 (TTPIIDTFK) are cytoplasmic. The chain crosses the membrane as a helical span at residues 491-511 (VPKEMFTVGCCVFAFLVGLLF). Residues 512-527 (VQRSGNYFVTMFDDYS) are Extracellular-facing. Residues 528-548 (ATLPLTLIVILENIAVAWIYG) traverse the membrane as a helical segment. At 549–573 (TKKFMQELTEMLGFRPYRFYFYMWK) the chain is on the cytoplasmic side. The helical transmembrane segment at 574 to 594 (FVSPLCMAVLTTASIIQLGVT) threads the bilayer. Residues 595–617 (PPGYSAWIKEEAAERYLYFPNWA) lie on the Extracellular side of the membrane. Residues 618 to 638 (MALLITLIVVATLPIPVVFVL) traverse the membrane as a helical segment. Residues 639 to 727 (RHFHLLSDGS…LLASTPESEL (89 aa)) lie on the Cytoplasmic side of the membrane. A phosphoserine mark is found at Ser665 and Ser701. Residues 680–727 (VPSEAPSPMPTHRSYLGPGSTSPLETSGNPNGRYGSGYLLASTPESEL) are disordered. Residues 698–709 (GSTSPLETSGNP) show a composition bias toward polar residues.

The protein belongs to the sodium:neurotransmitter symporter (SNF) (TC 2.A.22) family.

It localises to the cytoplasmic vesicle. Its subcellular location is the secretory vesicle. The protein resides in the synaptic vesicle membrane. It is found in the postsynapse. The protein localises to the presynapse. The catalysed reaction is L-proline(in) + Na(+)(in) = L-proline(out) + Na(+)(out). It carries out the reaction L-leucine(in) + Na(+)(in) = L-leucine(out) + Na(+)(out). It catalyses the reaction glycine(in) + Na(+)(in) = glycine(out) + Na(+)(out). The enzyme catalyses L-alanine(in) + Na(+)(in) = L-alanine(out) + Na(+)(out). The catalysed reaction is L-glutamine(in) + Na(+)(in) = L-glutamine(out) + Na(+)(out). Its function is as follows. Synaptic vesicle transporter with apparent selectivity for neutral amino acids. The transport is sodium-coupled but chloride-independent, likely driven by the proton electrochemical gradient generated by vacuolar H(+)-ATPase in an overall electrogenic mechanism. May contribute to the synaptic uptake of neurotransmitter precursors in a process coupled in part to vesicle exocytosis. The polypeptide is Sodium-dependent neutral amino acid transporter SLC6A17 (Homo sapiens (Human)).